The following is a 167-amino-acid chain: Shikimate kinase (167 aa).

12–17 (GSGKTT) provides a ligand contact to ATP. Residue threonine 16 participates in Mg(2+) binding. Residues aspartate 34, arginine 58, and glycine 80 each contribute to the substrate site. Arginine 117 provides a ligand contact to ATP. Arginine 135 lines the substrate pocket. Arginine 152 is an ATP binding site.

This sequence belongs to the shikimate kinase family. In terms of assembly, monomer. Mg(2+) is required as a cofactor.

The protein localises to the cytoplasm. The enzyme catalyses shikimate + ATP = 3-phosphoshikimate + ADP + H(+). The protein operates within metabolic intermediate biosynthesis; chorismate biosynthesis; chorismate from D-erythrose 4-phosphate and phosphoenolpyruvate: step 5/7. Its function is as follows. Catalyzes the specific phosphorylation of the 3-hydroxyl group of shikimic acid using ATP as a cosubstrate. This Salinispora arenicola (strain CNS-205) protein is Shikimate kinase.